Reading from the N-terminus, the 92-residue chain is 11 kDa excretory-secretory protein (92 aa).

In Trichostrongylus colubriformis (Black scour worm), this protein is 11 kDa excretory-secretory protein.